Here is a 315-residue protein sequence, read N- to C-terminus: Long form salivary protein D7L2 (315 aa).

A signal peptide spans 1–18 (MIVAPVVLSIFLQLFVQA). 4 cysteine pairs are disulfide-bonded: cysteine 37–cysteine 73, cysteine 69–cysteine 128, cysteine 178–cysteine 211, and cysteine 252–cysteine 263.

Belongs to the PBP/GOBP family. In terms of assembly, interacts with host coagulation factor XII/F12 (inactive and activated). Interacts with host coagulation factor XI/F11 (inactive).

The protein localises to the secreted. Its function is as follows. Modulates blood feeding of female mosquitoes on vertebrate species by binding and sequestering different mediators involved in the host response. Binds leukotriene B4 and leukotriene D4. Exhibits anticoagulant activity targeting the intrinsic coagulation pathway; binds coagulation factors XII and XI, preventing generation of activated FXIIa and FXIa. This is Long form salivary protein D7L2 from Anopheles gambiae (African malaria mosquito).